We begin with the raw amino-acid sequence, 138 residues long: Putative pre-16S rRNA nuclease (138 aa).

It belongs to the YqgF nuclease family.

The protein resides in the cytoplasm. Its function is as follows. Could be a nuclease involved in processing of the 5'-end of pre-16S rRNA. This chain is Putative pre-16S rRNA nuclease, found in Escherichia coli O157:H7.